The chain runs to 619 residues: 1-deoxy-D-xylulose-5-phosphate synthase (619 aa).

Thiamine diphosphate contacts are provided by residues His-80 and 121–123 (GHS). Asp-152 is a Mg(2+) binding site. Residues 153–154 (GA), Asn-181, Tyr-288, and Glu-370 each bind thiamine diphosphate. Asn-181 provides a ligand contact to Mg(2+).

This sequence belongs to the transketolase family. DXPS subfamily. Homodimer. It depends on Mg(2+) as a cofactor. Requires thiamine diphosphate as cofactor.

The enzyme catalyses D-glyceraldehyde 3-phosphate + pyruvate + H(+) = 1-deoxy-D-xylulose 5-phosphate + CO2. It participates in metabolic intermediate biosynthesis; 1-deoxy-D-xylulose 5-phosphate biosynthesis; 1-deoxy-D-xylulose 5-phosphate from D-glyceraldehyde 3-phosphate and pyruvate: step 1/1. Its function is as follows. Catalyzes the acyloin condensation reaction between C atoms 2 and 3 of pyruvate and glyceraldehyde 3-phosphate to yield 1-deoxy-D-xylulose-5-phosphate (DXP). The protein is 1-deoxy-D-xylulose-5-phosphate synthase of Yersinia pseudotuberculosis serotype I (strain IP32953).